Consider the following 286-residue polypeptide: Putative L-ribulose-5-phosphate 3-epimerase SgbU (286 aa).

The protein belongs to the L-ribulose-5-phosphate 3-epimerase family.

The enzyme catalyses L-ribulose 5-phosphate = L-xylulose 5-phosphate. Its function is as follows. Catalyzes the isomerization of L-xylulose-5-phosphate to L-ribulose-5-phosphate. In Haemophilus influenzae (strain ATCC 51907 / DSM 11121 / KW20 / Rd), this protein is Putative L-ribulose-5-phosphate 3-epimerase SgbU (sgbU).